Consider the following 141-residue polypeptide: Large ribosomal subunit protein uL16 (141 aa).

The segment at Met-1–Arg-23 is disordered.

The protein belongs to the universal ribosomal protein uL16 family. Part of the 50S ribosomal subunit.

In terms of biological role, binds 23S rRNA and is also seen to make contacts with the A and possibly P site tRNAs. This is Large ribosomal subunit protein uL16 from Helicobacter acinonychis (strain Sheeba).